A 323-amino-acid polypeptide reads, in one-letter code: CIMIP2 protein CG18335 (323 aa).

It belongs to the CIMIP2 family.

It is found in the cytoplasm. The protein localises to the cytoskeleton. It localises to the cilium axoneme. Functionally, probable microtubule inner protein (MIP) part of the dynein-decorated doublet microtubules (DMTs) in cilium axoneme. The polypeptide is CIMIP2 protein CG18335 (Drosophila melanogaster (Fruit fly)).